The chain runs to 394 residues: Elongation factor Tu 1 (394 aa).

One can recognise a tr-type G domain in the interval 10–204 (KPHVNVGTIG…HLDTYIPEPE (195 aa)). Positions 19–26 (GHVDHGKT) are G1. 19–26 (GHVDHGKT) contributes to the GTP binding site. Thr26 contributes to the Mg(2+) binding site. Residues 60 to 64 (GITIN) are G2. The G3 stretch occupies residues 81-84 (DCPG). Residues 81 to 85 (DCPGH) and 136 to 139 (NKCD) each bind GTP. The interval 136-139 (NKCD) is G4. Positions 174–176 (SAL) are G5.

Belongs to the TRAFAC class translation factor GTPase superfamily. Classic translation factor GTPase family. EF-Tu/EF-1A subfamily. Monomer.

The protein localises to the cytoplasm. The catalysed reaction is GTP + H2O = GDP + phosphate + H(+). GTP hydrolase that promotes the GTP-dependent binding of aminoacyl-tRNA to the A-site of ribosomes during protein biosynthesis. This Haemophilus influenzae (strain 86-028NP) protein is Elongation factor Tu 1.